The primary structure comprises 215 residues: Uracil-DNA glycosylase (215 aa).

Aspartate 59 serves as the catalytic Proton acceptor.

It belongs to the uracil-DNA glycosylase (UDG) superfamily. UNG family.

It is found in the cytoplasm. The catalysed reaction is Hydrolyzes single-stranded DNA or mismatched double-stranded DNA and polynucleotides, releasing free uracil.. In terms of biological role, excises uracil residues from the DNA which can arise as a result of misincorporation of dUMP residues by DNA polymerase or due to deamination of cytosine. This is Uracil-DNA glycosylase from Aliarcobacter butzleri (strain RM4018) (Arcobacter butzleri).